The sequence spans 72 residues: ATP synthase subunit L (72 aa).

As to quaternary structure, F-type ATP synthases have 2 components, the catalytic core F(1) and the membrane-embedded component F(0), linked together by a central stalk and a peripheral stalk. The central stalk, also called rotor shaft, is often seen as part of F(1). The peripheral stalk is seen as part of F(0). F(0) contains the membrane channel next to the rotor. F-type ATP synthases form dimers but each monomer functions independently in ATP generation. The dimer consists of 18 different polypeptides: ATP1 (subunit alpha, part of F(1), 3 molecules per monomer), ATP2 (subunit beta, part of F(1), 3 molecules per monomer), ATP3 (subunit gamma, part of the central stalk), ATP4 (subunit b, part of the peripheral stalk), ATP5/OSCP (subunit 5/OSCP, part of the peripheral stalk), ATP6 (subunit a, part of the peripheral stalk), ATP7 (subunit d, part of the peripheral stalk), ATP8 (subunit 8, part of the peripheral stalk), OLI1 (subunit c, part of the rotor, 10 molecules per monomer), ATP14 (subunit h, part of the peripheral stalk), ATP15 (subunit epsilon, part of the central stalk), ATP16 (subunit delta, part of the central stalk), ATP17 (subunit f, part of the peripheral stalk), ATP18 (subunit i/j, part of the peripheral stalk). Dimer-specific subunits are ATP19 (subunit k, at interface between monomers), ATP20 (subunit g, at interface between monomers), TIM11 (subunit e, at interface between monomers). Also contains subunit L.

The protein localises to the mitochondrion inner membrane. Mitochondrial membrane ATP synthase (F(1)F(0) ATP synthase or Complex V) produces ATP from ADP in the presence of a proton gradient across the membrane which is generated by electron transport complexes of the respiratory chain. F-type ATP synthases consist of two structural domains, F(1) - containing the extramembraneous catalytic core, and F(0) - containing the membrane proton channel, linked together by a central stalk and a peripheral stalk. During catalysis, ATP synthesis in the catalytic domain of F(1) is coupled via a rotary mechanism of the central stalk subunits to proton translocation. The polypeptide is ATP synthase subunit L (Pichia angusta (Yeast)).